Here is a 120-residue protein sequence, read N- to C-terminus: 2-amino-4-hydroxy-6-hydroxymethyldihydropteridine pyrophosphokinase (120 aa).

The protein belongs to the HPPK family.

The catalysed reaction is 6-hydroxymethyl-7,8-dihydropterin + ATP = (7,8-dihydropterin-6-yl)methyl diphosphate + AMP + H(+). It participates in cofactor biosynthesis; tetrahydrofolate biosynthesis; 2-amino-4-hydroxy-6-hydroxymethyl-7,8-dihydropteridine diphosphate from 7,8-dihydroneopterin triphosphate: step 4/4. In terms of biological role, catalyzes the transfer of pyrophosphate from adenosine triphosphate (ATP) to 6-hydroxymethyl-7,8-dihydropterin, an enzymatic step in folate biosynthesis pathway. This is 2-amino-4-hydroxy-6-hydroxymethyldihydropteridine pyrophosphokinase (folK) from Pseudomonas putida (Arthrobacter siderocapsulatus).